The sequence spans 356 residues: MASKSDAIAPEKEKALNLVLSQIERNFGKGAIMRLGDAARLRVETISTGALTLDLALGGGLPKGRIIEVYGPESSGKTTLTLHAIAEVQKQGGIAAFVDAEHALDPVYATSVGVDIDNLLISQPDTGEMALEIVDQLVRSAAVDIVVIDSVAALVPRAEIEGEMGDAQVGLQARLMSQAMRKITGNIGKSGCTVIFLNQLRQKIGVTYGSPETTTGGQALKFYASVRLDIRRIQTLKKGTEEYGTRAKVKVVKNKVAPPFRIAEFDILFGKGISTLGCLVDLAEETGVILRKGAWYSYNGDNIGQGRDNTITHLEEHPDFRATVEQQVREKLALGAQVSANTVGAAPAKTAEDTDS.

Residue 71–78 (GPESSGKT) participates in ATP binding.

The protein belongs to the RecA family.

It localises to the cytoplasm. Can catalyze the hydrolysis of ATP in the presence of single-stranded DNA, the ATP-dependent uptake of single-stranded DNA by duplex DNA, and the ATP-dependent hybridization of homologous single-stranded DNAs. It interacts with LexA causing its activation and leading to its autocatalytic cleavage. This is Protein RecA from Synechococcus elongatus (strain ATCC 33912 / PCC 7942 / FACHB-805) (Anacystis nidulans R2).